A 521-amino-acid chain; its full sequence is Zinc finger and BTB domain-containing protein 18 (521 aa).

Residues 24-91 enclose the BTB domain; that stretch reads CDCTVLVGDA…MYEGKLQFKD (68 aa). Residues 190–230 form a disordered region; it reads DSASIPQTGGEAETHTAAAGKTADSPCSSTGSLSHRSATSM. Low complexity predominate over residues 197 to 212; it reads TGGEAETHTAAAGKTA. Residues 214 to 230 are compositionally biased toward polar residues; it reads SPCSSTGSLSHRSATSM. C2H2-type zinc fingers lie at residues 369-391, 409-431, 437-459, and 465-488; these read FMCP…LSTH, PTCS…ERTH, FTCT…AVVH, and HACK…RKFH.

This sequence belongs to the krueppel C2H2-type zinc-finger protein family. ZBTB18 subfamily.

The protein resides in the nucleus. Transcriptional repressor that plays a role in various developmental processes. Specifically binds the consensus DNA sequence 5'-[AC]ACATCTG[GT][AC]-3' which contains the E box core, and acts by recruiting chromatin remodeling multiprotein complexes. The protein is Zinc finger and BTB domain-containing protein 18 (zbtb18) of Xenopus tropicalis (Western clawed frog).